Reading from the N-terminus, the 492-residue chain is Beclin 1-associated autophagy-related key regulator (492 aa).

S29 is subject to Phosphoserine. The stretch at 70–180 (RDRERFIDKK…KLGDLVEKKT (111 aa)) forms a coiled coil. 2 disordered regions span residues 213 to 232 (TSGR…MTSS) and 411 to 473 (GVAG…AGGM). Positions 222-232 (SSETDSAMTSS) are enriched in polar residues. A Phosphoserine modification is found at S416. Acidic residues predominate over residues 424 to 433 (VSDEETDLGT). T429 is subject to Phosphothreonine. Over residues 447-473 (PSQPVEVSQSQSTQASPPIASSSAGGM) the composition is skewed to low complexity.

It belongs to the ATG14 family. In terms of assembly, forms homooligomers; homo-oligomerization is essential for the roles in membrane tethering and enhancement of SNARE-mediated fusion. Component of the PI3K (PI3KC3/PI3K-III/class III phosphatidylinositol 3-kinase) complex I (PI3KC3-C1) in which the core composed of the catalytic subunit PIK3C3, the regulatory subunit PIK3R4 and BECN1 is associated with ATG14. PI3KC3-C1 displays a V-shaped architecture with PIK3R4 serving as a bridge between PIK3C3 and the ATG14:BECN1 subcomplex. PI3KC3-C1 can associate with further regulatory subunits. Interacts with PIK3CB. Interacts (via coiled-coil domain) with BECN2 (via coiled-coil domain); this interaction is tighter than BECN2 self-association. Interacts with the STX17-SNAP29 binary t-SNARE complex. Interacts with NRBF2. Interacts with PIK3C3 and BECN1; this interaction is increased in the absence of TMEM39A. Interacts with STEEP1; the interaction is required for trafficking of STING1 from the endoplasmic reticulum. Interacts with ARMC3 (via ARM domains). Ubiquitinated via 'Lys-6', 'Lys-11' and 'Lys-63'-linked polyubiquitin chains on multiple lysines by MARCHF7, leading to ATG14 aggregation and loss of interaction with STX17.

It is found in the cytoplasm. It localises to the endoplasmic reticulum membrane. The protein resides in the preautophagosomal structure membrane. In terms of biological role, required for both basal and inducible autophagy. Determines the localization of the autophagy-specific PI3-kinase complex. Plays a role in autophagosome formation and MAP1LC3/LC3 conjugation to phosphatidylethanolamine. Promotes BECN1 translocation from the trans-Golgi network to autophagosomes. Enhances PIK3C3 activity in a BECN1-dependent manner. Essential for the autophagy-dependent phosphorylation of BECN1. Stimulates the phosphorylation of BECN1, but suppresses the phosphorylation PIK3C3 by AMPK. Binds to STX17-SNAP29 binary t-SNARE complex on autophagosomes and primes it for VAMP8 interaction to promote autophagosome-endolysosome fusion. Modulates the hepatic lipid metabolism. The polypeptide is Beclin 1-associated autophagy-related key regulator (Rattus norvegicus (Rat)).